The following is a 412-amino-acid chain: 4-hydroxyphenylpyruvate dioxygenase (412 aa).

2 consecutive VOC domains span residues 31-179 and 209-369; these read GYDH…LISR and RIDH…LFTK. Fe cation-binding residues include histidine 212, histidine 295, and glutamate 380.

Belongs to the 4HPPD family. Requires Fe cation as cofactor.

The catalysed reaction is 3-(4-hydroxyphenyl)pyruvate + O2 = homogentisate + CO2. It participates in amino-acid degradation; L-phenylalanine degradation; acetoacetate and fumarate from L-phenylalanine: step 3/6. In Neurospora crassa (strain ATCC 24698 / 74-OR23-1A / CBS 708.71 / DSM 1257 / FGSC 987), this protein is 4-hydroxyphenylpyruvate dioxygenase.